The following is a 312-amino-acid chain: MPPRLPLAQAARCCQASLTARPSVPASSPTSSLISLFAALSVQTRSASILASLSDNRGAYHKRIRKGRGPSSGYGKTAGRGTKGQKAHGHVKPWFQGGQTPLIVSHGRKGFVNQFAADMSELNLEKLQEWIEAGRIDPTKPITPKEIIKSGIIGSSIKDGIKLLGRGKESFKIPVTITVSRASASAIEAIEAAGGKIVTRFYTKESLKRLVEGKSLHTDKPLPVGKEHVEEILAQARSLKKKYYRLPDPTSRWDIEYYRDPAHRGYLSHQLAPGESPSLYFKVPTGGEKVKVVRADKVKASKTGDVASEKLF.

The disordered stretch occupies residues R63–G89. The span at P70–T82 shows a compositional bias: gly residues.

This sequence belongs to the universal ribosomal protein uL15 family. As to quaternary structure, component of the mitochondrial large ribosomal subunit (mt-LSU). Mature N.crassa 74S mitochondrial ribosomes consist of a small (37S) and a large (54S) subunit. The 37S small subunit contains a 16S ribosomal RNA (16S mt-rRNA) and 32 different proteins. The 54S large subunit contains a 23S rRNA (23S mt-rRNA) and 42 different proteins.

The protein resides in the mitochondrion. Component of the mitochondrial ribosome (mitoribosome), a dedicated translation machinery responsible for the synthesis of mitochondrial genome-encoded proteins, including at least some of the essential transmembrane subunits of the mitochondrial respiratory chain. The mitoribosomes are attached to the mitochondrial inner membrane and translation products are cotranslationally integrated into the membrane. The chain is Large ribosomal subunit protein uL15m (mrpl10) from Neurospora crassa (strain ATCC 24698 / 74-OR23-1A / CBS 708.71 / DSM 1257 / FGSC 987).